A 247-amino-acid chain; its full sequence is tRNA (guanine-N(1)-)-methyltransferase (247 aa).

Residues Gly117 and 136 to 141 contribute to the S-adenosyl-L-methionine site; that span reads LGDFVL.

This sequence belongs to the RNA methyltransferase TrmD family. In terms of assembly, homodimer.

The protein localises to the cytoplasm. It catalyses the reaction guanosine(37) in tRNA + S-adenosyl-L-methionine = N(1)-methylguanosine(37) in tRNA + S-adenosyl-L-homocysteine + H(+). Functionally, specifically methylates guanosine-37 in various tRNAs. This is tRNA (guanine-N(1)-)-methyltransferase from Myxococcus xanthus (strain DK1622).